A 310-amino-acid chain; its full sequence is uncharacterized protein (310 aa).

At 1-6 the chain is on the cytoplasmic side; it reads MISEKA. The PQ-loop 1 domain maps to 5–69; it reads KAATALATIA…SKGNVILQVQ (65 aa). The helical transmembrane segment at 7–27 threads the bilayer; it reads ATALATIATVCWCVQLIPQII. The Extracellular portion of the chain corresponds to 28–36; sequence YNWKKKDCT. A helical membrane pass occupies residues 37–57; it reads GLPPLMMFLWVVSGIPFAIYF. Topologically, residues 58–61 are cytoplasmic; it reads CVSK. A helical transmembrane segment spans residues 62-82; the sequence is GNVILQVQPHLFMFFCSISFV. Topologically, residues 83–96 are extracellular; the sequence is QSCYYPPISMARSK. The chain crosses the membrane as a helical span at residues 97–117; that stretch reads IVMIVAAIIAADVGMEVGFIL. Residues 118–131 are Cytoplasmic-facing; that stretch reads WLRPLYEKGVKWPD. Residues 132-152 form a helical membrane-spanning segment; that stretch reads LIFGISASVLLAVGLLPPYFE. The region spanning 138 to 194 is the PQ-loop 2 domain; sequence ASVLLAVGLLPPYFELAKRKGRVIGINFAFLFIDSLGAWLSIISVILGNMDIMGIIL. Over 153-164 the chain is Extracellular; it reads LAKRKGRVIGIN. Residues 165–185 traverse the membrane as a helical segment; it reads FAFLFIDSLGAWLSIISVILG. At 186–191 the chain is on the cytoplasmic side; sequence NMDIMG. Residues 192 to 212 traverse the membrane as a helical segment; sequence IILYSIVAGMELGIFASHFIW. Over 213-310 the chain is Extracellular; that stretch reads WCRFRFLAKG…DPDRYSRLSV (98 aa). Position 229 is a phosphoserine (Ser229). 2 N-linked (GlcNAc...) asparagine glycosylation sites follow: Asn251 and Asn259.

It localises to the cell membrane. This is an uncharacterized protein from Saccharomyces cerevisiae (strain ATCC 204508 / S288c) (Baker's yeast).